The following is a 368-amino-acid chain: UDP-N-acetylglucosamine--N-acetylmuramyl-(pentapeptide) pyrophosphoryl-undecaprenol N-acetylglucosamine transferase (368 aa).

Residues 11-13, Asn-123, Arg-164, Ser-188, Ile-250, and Gln-295 contribute to the UDP-N-acetyl-alpha-D-glucosamine site; that span reads TGG.

Belongs to the glycosyltransferase 28 family. MurG subfamily.

Its subcellular location is the cell inner membrane. The enzyme catalyses di-trans,octa-cis-undecaprenyl diphospho-N-acetyl-alpha-D-muramoyl-L-alanyl-D-glutamyl-meso-2,6-diaminopimeloyl-D-alanyl-D-alanine + UDP-N-acetyl-alpha-D-glucosamine = di-trans,octa-cis-undecaprenyl diphospho-[N-acetyl-alpha-D-glucosaminyl-(1-&gt;4)]-N-acetyl-alpha-D-muramoyl-L-alanyl-D-glutamyl-meso-2,6-diaminopimeloyl-D-alanyl-D-alanine + UDP + H(+). Its pathway is cell wall biogenesis; peptidoglycan biosynthesis. Its function is as follows. Cell wall formation. Catalyzes the transfer of a GlcNAc subunit on undecaprenyl-pyrophosphoryl-MurNAc-pentapeptide (lipid intermediate I) to form undecaprenyl-pyrophosphoryl-MurNAc-(pentapeptide)GlcNAc (lipid intermediate II). This Solidesulfovibrio magneticus (strain ATCC 700980 / DSM 13731 / RS-1) (Desulfovibrio magneticus) protein is UDP-N-acetylglucosamine--N-acetylmuramyl-(pentapeptide) pyrophosphoryl-undecaprenol N-acetylglucosamine transferase.